Here is a 72-residue protein sequence, read N- to C-terminus: Translation initiation factor IF-1 (72 aa).

The S1-like domain maps to 1–72 (MAKDDVIEVD…DKGRITFRYK (72 aa)).

Belongs to the IF-1 family. In terms of assembly, component of the 30S ribosomal translation pre-initiation complex which assembles on the 30S ribosome in the order IF-2 and IF-3, IF-1 and N-formylmethionyl-tRNA(fMet); mRNA recruitment can occur at any time during PIC assembly.

The protein localises to the cytoplasm. Functionally, one of the essential components for the initiation of protein synthesis. Stabilizes the binding of IF-2 and IF-3 on the 30S subunit to which N-formylmethionyl-tRNA(fMet) subsequently binds. Helps modulate mRNA selection, yielding the 30S pre-initiation complex (PIC). Upon addition of the 50S ribosomal subunit IF-1, IF-2 and IF-3 are released leaving the mature 70S translation initiation complex. This Nitratiruptor sp. (strain SB155-2) protein is Translation initiation factor IF-1.